The sequence spans 123 residues: MSSTTTTTQTTSQVETKAVSKPLGMRVNGKQWHAPKKAFRPGSGLTSYEKRAKERQLLAAVKAKEKELKDEKEAERKRRIEALKEKRAKKEEKERYEKMAEKMHKKRVERLKRKEKRNKLINS.

A compositionally biased stretch (low complexity) spans 1 to 13 (MSSTTTTTQTTSQ). Disordered stretches follow at residues 1-47 (MSST…GLTS) and 85-123 (EKRA…LINS). Residues 49–110 (EKRAKERQLL…EKMHKKRVER (62 aa)) are a coiled coil. Positions 85–102 (EKRAKKEEKERYEKMAEK) are enriched in basic and acidic residues. Residues 103-123 (MHKKRVERLKRKEKRNKLINS) are compositionally biased toward basic residues.

The protein belongs to the CGR1 family.

The protein resides in the nucleus. Its subcellular location is the nucleolus. Functionally, involved in nucleolar integrity and required for processing of the pre-rRNA for the 60S ribosome subunit. The polypeptide is rRNA-processing protein cgr-1 (cgr-1) (Neurospora crassa (strain ATCC 24698 / 74-OR23-1A / CBS 708.71 / DSM 1257 / FGSC 987)).